The following is a 162-amino-acid chain: Interleukin-15 (162 aa).

Positions 1–29 (MKILKPYMRNTSISCYLCFLLNSHFLTEA) are cleaved as a signal peptide. The propeptide occupies 30–48 (GIHVFILGCVSVGLPKTEA). 2 cysteine pairs are disulfide-bonded: Cys83–Cys133 and Cys90–Cys136. Asn104, Asn108, and Asn119 each carry an N-linked (GlcNAc...) asparagine glycan.

The protein belongs to the IL-15/IL-21 family.

The protein localises to the secreted. In terms of biological role, cytokine that plays a major role in the development of inflammatory and protective immune responses to microbial invaders and parasites by modulating immune cells of both the innate and adaptive immune systems. Stimulates the proliferation and activation of natural killer cells, T-cells and B-cells and promotes the secretion of several cytokines. In monocytes, induces the production of IL8 and monocyte chemotactic protein 1/CCL2, two chemokines that attract neutrophils and monocytes respectively to sites of infection. Unlike most cytokines, which are secreted in soluble form, IL15 is expressed in association with its high affinity IL15RA on the surface of IL15-producing cells and delivers signals to target cells that express IL2RB and IL2RG receptor subunits. Binding to its receptor triggers the phosphorylation of JAK1 and JAK3 and the recruitment and subsequent phosphorylation of signal transducer and activator of transcription-3/STAT3 and STAT5. In mast cells, induces the rapid tyrosine phosphorylation of STAT6 and thereby controls mast cell survival and release of cytokines such as IL4. The polypeptide is Interleukin-15 (Il15) (Mus musculus (Mouse)).